The following is a 275-amino-acid chain: Voltage-dependent calcium channel gamma-5 subunit (275 aa).

Helical transmembrane passes span 8–28 (ALTL…GIAV), 103–123 (FPLV…IGHI), 129–149 (ILAF…VVGL), and 181–201 (FAAI…YLFM).

Belongs to the PMP-22/EMP/MP20 family. CACNG subfamily. As to quaternary structure, the L-type calcium channel is composed of five subunits: alpha-1, alpha-2/delta, beta and gamma. Acts as an auxiliary subunit for AMPA-selective glutamate receptors (AMPARs). Found in a complex with GRIA1, GRIA2, GRIA3, GRIA4, CNIH2, CNIH3, CACNG2, CACNG3, CACNG4, CACNG7 and CACNG8. Interacts with GRIA1, GRIA2, GRIA3 and GRIA4. As to expression, brain. Enriched in Bergman glia, as well as a variety of neuronal populations including locus coeruleus, olfactory bulb, lateral septal nucleus, interpeduncular nucleus, and the CA2 and rostral/medial CA1 regions of hippocampus.

It is found in the membrane. The protein resides in the postsynaptic density membrane. Regulates the gating properties of AMPA-selective glutamate receptors (AMPARs). Modulates their gating properties by accelerating their rates of activation, deactivation and desensitization. Displays subunit-specific AMPA receptor regulation. Shows specificity for GRIA1, GRIA4 and the long isoform of GRIA2. Thought to stabilize the calcium channel in an inactivated (closed) state. This is Voltage-dependent calcium channel gamma-5 subunit (Cacng5) from Mus musculus (Mouse).